The following is a 115-amino-acid chain: UPF0102 protein NMCC_2054 (115 aa).

Belongs to the UPF0102 family.

The protein is UPF0102 protein NMCC_2054 of Neisseria meningitidis serogroup C (strain 053442).